Here is a 23-residue protein sequence, read N- to C-terminus: M-poneritoxin-Nc1a (23 aa).

It belongs to the non-disulfide-bridged peptide (NDBP) superfamily. Medium-length antimicrobial peptide (group 3) family. Ponericin-W subfamily. Expressed by the venom gland.

The protein resides in the secreted. The protein localises to the target cell membrane. In terms of biological role, membrane-perturbating peptide with multiple activities. It is insecticidal, since it induces contractile paralysis in insects (L.cuprina) during several hours, and death after 24 hours. It shows antibacterial activity with higher activity against Gram-positive than Gram-negative bacteria. It is also antiparasitic, since it potently inhibits the larval development of the major pathogenic nematode of ruminants (H.contortus, IC(50)=5.1 uM), but fails to reduce the motility of adult males of the other nematode B.malayi. It also shows cytotoxic activity against HEK293 cells (EC(50)=12-14 uM) and induces hemolysis in human erythrocytes (EC(50)=28.6-48.2 uM). In addition, it causes an important increase in intracellular calcium concentration on neuronal and epithelial cell lines, which supports a non-specific membrane perturbation mechanism of action. In vivo, it induces pain by intraplantar injection into mice, suggesting a defensive function against vertebrate predators. This Neoponera commutata (Large hunting ant) protein is M-poneritoxin-Nc1a.